Consider the following 335-residue polypeptide: Gibberellin 2-beta-dioxygenase 3 (335 aa).

Positions 175-278 (ESDSCLRMNH…RISMIYFAGP (104 aa)) constitute a Fe2OG dioxygenase domain. Fe cation is bound by residues histidine 202, aspartate 204, and histidine 259. Arginine 269 is a catalytic residue.

The protein belongs to the iron/ascorbate-dependent oxidoreductase family. GA2OX subfamily. Requires Fe(2+) as cofactor. As to expression, not expressed in the apex.

It carries out the reaction gibberellin A1 + 2-oxoglutarate + O2 = gibberellin A8 + succinate + CO2. It functions in the pathway plant hormone biosynthesis; gibberellin biosynthesis. Catalyzes the 2-beta-hydroxylation of several biologically active gibberellins, leading to the homeostatic regulation of their endogenous level. Catabolism of gibberellins (GAs) plays a central role in plant development. Converts GA9/GA20 to GA51/GA29 and GA4/GA1 to GA34/GA8. The polypeptide is Gibberellin 2-beta-dioxygenase 3 (GA2OX3) (Arabidopsis thaliana (Mouse-ear cress)).